A 1393-amino-acid chain; its full sequence is DNA-directed RNA polymerase subunit beta' (1393 aa).

Residues C70, C72, C85, and C88 each contribute to the Zn(2+) site. D461, D463, and D465 together coordinate Mg(2+). Zn(2+)-binding residues include C815, C889, C896, and C899.

This sequence belongs to the RNA polymerase beta' chain family. The RNAP catalytic core consists of 2 alpha, 1 beta, 1 beta' and 1 omega subunit. When a sigma factor is associated with the core the holoenzyme is formed, which can initiate transcription. The cofactor is Mg(2+). It depends on Zn(2+) as a cofactor.

It carries out the reaction RNA(n) + a ribonucleoside 5'-triphosphate = RNA(n+1) + diphosphate. Functionally, DNA-dependent RNA polymerase catalyzes the transcription of DNA into RNA using the four ribonucleoside triphosphates as substrates. The chain is DNA-directed RNA polymerase subunit beta' from Vesicomyosocius okutanii subsp. Calyptogena okutanii (strain HA).